The primary structure comprises 236 residues: Lectin alpha chain (236 aa).

Residues E8 and D10 each coordinate Mn(2+). The Ca(2+) site is built by D10, Y12, N14, and D19. Y12 is an a carbohydrate binding site. D19, H24, and S34 together coordinate Mn(2+). 99–100 (LY) is an a carbohydrate binding site. A Ca(2+)-binding site is contributed by D207. Residue R227 coordinates a carbohydrate.

This sequence belongs to the leguminous lectin family. As to quaternary structure, equilibrium between homodimer and homotetramer. Oligomerization is pH-dependent with homotetramers forming at pH 6.5 and above. Post-translationally, the beta and gamma chains are produced by partial proteolytic processing of the lectin alpha chain by an asparaginyl endopeptidase. Mixture of 60% alpha lectin and 40% of its beta and gamma proteolytic fragments. In terms of tissue distribution, seed.

In terms of biological role, D-mannose/D-glucose-binding lectin. Has anti-inflammatory activity in rats. Induces histamine release in mast cells from rat. Induces lymphocyte proliferation and IFNG production. The polypeptide is Lectin alpha chain (Cratylia argentea (Cratylia floribunda)).